Consider the following 78-residue polypeptide: RNA-binding protein KhpA (78 aa).

One can recognise a KH domain in the interval threonine 29 to lysine 78.

It belongs to the KhpA RNA-binding protein family.

Its subcellular location is the cytoplasm. In terms of biological role, a probable RNA-binding protein. This Chlamydia caviae (strain ATCC VR-813 / DSM 19441 / 03DC25 / GPIC) (Chlamydophila caviae) protein is RNA-binding protein KhpA.